We begin with the raw amino-acid sequence, 340 residues long: Pilin (340 aa).

The signal sequence occupies residues 1 to 23; the sequence is MKLRHLLLTGAALTSFAATTVHG. 2 consecutive cross-links (isoaspartyl lysine isopeptide (Lys-Asn)) follow at residues 36–168 and 179–303; these read KNLD…QFKN and KKVS…TFTN. A Threonyl lysine isopeptide (Lys-Thr) (interchain with T-311) cross-link involves residue K161. An EVPTG sorting signal motif is present at residues 308–312; sequence EVPTG. T311 carries the pentaglycyl murein peptidoglycan amidated threonine; alternate modification. A Threonyl lysine isopeptide (Thr-Lys) (interchain with K-161); alternate cross-link involves residue T311. The propeptide at 312–340 is removed by sortase C1; the sequence is GVAMTVAPYIALGIVAVGGALYFVKKKNA.

This sequence belongs to the Streptococcus pilin family. As to quaternary structure, forms columns of about 3-nanometers in diameter of head-to-tail-assembled molecules. Post-translationally, proteolytically processed and assembled in pili through a transpeptidation reaction catalyzed by the sortase C1. The last pilin subunit is cross-linked to the peptidoglycan.

It localises to the secreted. Its subcellular location is the cell wall. The protein resides in the fimbrium. Its function is as follows. Major component of the pilus. A stack of the pilin subunits, joined by intermolecular isopeptide bonds, forms the pilus. The pilus is required for bacterial adhesion to host cells, for bacterial aggregation, and for biofilm formation. This Streptococcus pyogenes serotype M1 protein is Pilin.